A 295-amino-acid polypeptide reads, in one-letter code: Probable cell division protein WhiA (295 aa).

The segment at residues 262–293 is a DNA-binding region (H-T-H motif); sequence SLRELGKKLNLTKSQIYSKLKRIIKIAERFGD.

This sequence belongs to the WhiA family.

Functionally, involved in cell division and chromosome segregation. The protein is Probable cell division protein WhiA of Thermotoga maritima (strain ATCC 43589 / DSM 3109 / JCM 10099 / NBRC 100826 / MSB8).